We begin with the raw amino-acid sequence, 559 residues long: Putative protease Do-like 3, mitochondrial (559 aa).

A mitochondrion-targeting transit peptide spans 1–48; sequence MSFLCVRTVSRFRSLSRALAPGFLLLHGNAVPKTAVFFRQQSSNTRLF. Residues 59-81 form a disordered region; that stretch reads ENNSKSALKNKLPPGKEVSSKDA. Residues 100-292 form a serine protease region; it reads VFTVSSKPRL…FLNAIEESGE (193 aa). Residues His-138, Asp-169, and Ser-247 each act as charge relay system in the active site. The PDZ domain occupies 300-380; the sequence is NLTYQKMDND…HLVSMKKPCE (81 aa). The disordered stretch occupies residues 538–559; that stretch reads SEDLQPKQQNKRSKVPPKSKEH. Basic residues predominate over residues 546 to 559; the sequence is QNKRSKVPPKSKEH.

This sequence belongs to the peptidase S1C family.

The protein resides in the mitochondrion matrix. Functionally, putative serine protease. In Arabidopsis thaliana (Mouse-ear cress), this protein is Putative protease Do-like 3, mitochondrial (DEGP3).